Here is a 261-residue protein sequence, read N- to C-terminus: Type III pantothenate kinase (261 aa).

6–13 (DAGNSNIT) is an ATP binding site. Substrate contacts are provided by residues tyrosine 100 and 107–110 (GADR). The Proton acceptor role is filled by aspartate 109. Aspartate 129 contributes to the K(+) binding site. Threonine 132 is an ATP binding site. Threonine 184 lines the substrate pocket.

Belongs to the type III pantothenate kinase family. Homodimer. NH4(+) is required as a cofactor. Requires K(+) as cofactor.

Its subcellular location is the cytoplasm. The catalysed reaction is (R)-pantothenate + ATP = (R)-4'-phosphopantothenate + ADP + H(+). Its pathway is cofactor biosynthesis; coenzyme A biosynthesis; CoA from (R)-pantothenate: step 1/5. Its function is as follows. Catalyzes the phosphorylation of pantothenate (Pan), the first step in CoA biosynthesis. The chain is Type III pantothenate kinase from Solibacter usitatus (strain Ellin6076).